Here is a 275-residue protein sequence, read N- to C-terminus: MKTSVFIAIFNLLVCALAYTDLTGSIKINDKKITLGEFNTQEVKQLTINSPKDIIEIDLKSKDIKGKPEQIMVSLADVKNPAISTHYVPVVKESKIKLNIKALSIPEVLKTKDKLVLTIVIADSKSKNNMIRRLVEVLPSPEFKSTSRYQAKPRIGIQPEIHHIFREDERTVNPIVPVVFIIAAFTLLLGLFGSWVGFIGIDNLFRTFKTISKVQLLHNVSFLISVLGFELNFVKYYLGQSIFTTLFYGFILSIPCVYFGVSVLRSLAKNRALGK.

The first 18 residues, 1 to 18, serve as a signal peptide directing secretion; that stretch reads MKTSVFIAIFNLLVCALA. A run of 3 helical transmembrane segments spans residues 179–199, 214–234, and 241–261; these read VFII…VGFI, VQLL…LNFV, and SIFT…YFGV.

This sequence belongs to the SWP1 family. Component of the oligosaccharyltransferase (OST) complex.

Its subcellular location is the endoplasmic reticulum membrane. Its pathway is protein modification; protein glycosylation. Subunit of the oligosaccharyl transferase (OST) complex that catalyzes the initial transfer of a defined glycan (Glc(3)Man(9)GlcNAc(2) in eukaryotes) from the lipid carrier dolichol-pyrophosphate to an asparagine residue within an Asn-X-Ser/Thr consensus motif in nascent polypeptide chains, the first step in protein N-glycosylation. N-glycosylation occurs cotranslationally and the complex associates with the Sec61 complex at the channel-forming translocon complex that mediates protein translocation across the endoplasmic reticulum (ER). All subunits are required for a maximal enzyme activity. Plays a role in cell wall integrity and in engulfment by macrophages. This chain is Dolichyl-diphosphooligosaccharide--protein glycosyltransferase subunit delta, found in Candida albicans (strain SC5314 / ATCC MYA-2876) (Yeast).